A 262-amino-acid polypeptide reads, in one-letter code: Taurine import ATP-binding protein TauB (262 aa).

Residues 4 to 233 enclose the ABC transporter domain; sequence LELERISAQY…RYAAGESARA (230 aa). 38-45 lines the ATP pocket; that stretch reads GPSGSGKT.

The protein belongs to the ABC transporter superfamily. Taurine importer (TC 3.A.1.17.1) family. The complex is composed of two ATP-binding proteins (TauB), two transmembrane proteins (TauC) and a solute-binding protein (TauA).

It localises to the cell inner membrane. It carries out the reaction taurine(out) + ATP + H2O = taurine(in) + ADP + phosphate + H(+). Functionally, part of the ABC transporter complex TauABC involved in taurine import. Responsible for energy coupling to the transport system. This is Taurine import ATP-binding protein TauB from Pseudomonas putida (strain ATCC 47054 / DSM 6125 / CFBP 8728 / NCIMB 11950 / KT2440).